The sequence spans 599 residues: UvrABC system protein C (599 aa).

Residues 13–91 (NLPGVYRMIN…IKGFMPRYNV (79 aa)) form the GIY-YIG domain. The 36-residue stretch at 200–235 (QQVMDELGEKMNEAAEKMEYELAAVYRDRIQSLRQV) folds into the UVR domain.

The protein belongs to the UvrC family. As to quaternary structure, interacts with UvrB in an incision complex.

The protein resides in the cytoplasm. In terms of biological role, the UvrABC repair system catalyzes the recognition and processing of DNA lesions. UvrC both incises the 5' and 3' sides of the lesion. The N-terminal half is responsible for the 3' incision and the C-terminal half is responsible for the 5' incision. The protein is UvrABC system protein C of Methylobacillus flagellatus (strain ATCC 51484 / DSM 6875 / VKM B-1610 / KT).